Here is a 124-residue protein sequence, read N- to C-terminus: Putative membrane protein insertion efficiency factor (124 aa).

It belongs to the UPF0161 family.

The protein localises to the cell inner membrane. Could be involved in insertion of integral membrane proteins into the membrane. This is Putative membrane protein insertion efficiency factor from Psychrobacter cryohalolentis (strain ATCC BAA-1226 / DSM 17306 / VKM B-2378 / K5).